Here is an 833-residue protein sequence, read N- to C-terminus: Leucine--tRNA ligase (833 aa).

A 'HIGH' region motif is present at residues 41 to 52; that stretch reads PYPSGAGLHVGH. A 'KMSKS' region motif is present at residues 610-614; it reads KMSKS. Position 613 (Lys-613) interacts with ATP.

Belongs to the class-I aminoacyl-tRNA synthetase family.

The protein localises to the cytoplasm. The enzyme catalyses tRNA(Leu) + L-leucine + ATP = L-leucyl-tRNA(Leu) + AMP + diphosphate. This chain is Leucine--tRNA ligase, found in Streptococcus sanguinis (strain SK36).